The primary structure comprises 301 residues: MQTFAEISALREQIKTFKREGRRIAFVPTMGNLHEGHLTLVRKAREHADIVVVSIFVNPMQFDRADDLNNYPRTLEDDLSKLNGEAVELVFTPTPEMIYPEGLDKQTLVEVPGLSTMLEGASRPGHFRGVATVVTKLFNIVQPDVACFGEKDFQQLAIIRKMTTDLAMDIEIIGVPTVREMDGLAMSSRNGLLTIDERQRAPVLARTMRWISSAIRGGRDDFASIIEDASDQLRAAGLHPDEIFIRDARTLQVVNAESTQAVILMSAFLGKARLIDNQVVELVKDSKEEVDSAESESENSH.

Residue 30 to 37 (MGNLHEGH) participates in ATP binding. Histidine 37 functions as the Proton donor in the catalytic mechanism. Glutamine 61 provides a ligand contact to (R)-pantoate. Position 61 (glutamine 61) interacts with beta-alanine. 149–152 (GEKD) contributes to the ATP binding site. Glutamine 155 is a binding site for (R)-pantoate. ATP is bound by residues valine 178 and 186 to 189 (MSSR).

It belongs to the pantothenate synthetase family. In terms of assembly, homodimer.

It localises to the cytoplasm. The catalysed reaction is (R)-pantoate + beta-alanine + ATP = (R)-pantothenate + AMP + diphosphate + H(+). It participates in cofactor biosynthesis; (R)-pantothenate biosynthesis; (R)-pantothenate from (R)-pantoate and beta-alanine: step 1/1. Its function is as follows. Catalyzes the condensation of pantoate with beta-alanine in an ATP-dependent reaction via a pantoyl-adenylate intermediate. The polypeptide is Pantothenate synthetase (Vibrio vulnificus (strain CMCP6)).